A 501-amino-acid chain; its full sequence is CUGBP Elav-like family member 1 (501 aa).

The interval 2–196 (NGSLDHPDQP…DTQKDKEQKR (195 aa)) is binds strongly to URE. 2 RRM domains span residues 16–99 (IKMF…PADS) and 108–188 (RKLF…FADT). Low complexity-rich tracts occupy residues 274 to 298 (PTGS…TPSG) and 312 to 323 (SSPTSSTSSSVN). Residues 274 to 323 (PTGSSALTTSSSPLSVLTSSGTPSGQPAQSAWDAYKAGSSPTSSTSSSVN) are disordered. The segment at 397-501 (LLSQQNVSAA…KRSKNDSKPY (105 aa)) is binds strongly to URE. Residues 416 to 494 (ANLFIYHLPQ…KRLKVQLKRS (79 aa)) enclose the RRM 3 domain.

Belongs to the CELF/BRUNOL family.

It localises to the nucleus. It is found in the cytoplasm. In terms of biological role, RNA-binding protein implicated in the regulation of several post-transcriptional events. May be involved in mRNA translation activation and stability. Involved in the regulation of muscle-specific splicing of alpha actinin pre-mRNAs via the binding to the UR-repeat element (URE) at the branch point of the non-muscle (NM) exon. This chain is CUGBP Elav-like family member 1 (celf1), found in Danio rerio (Zebrafish).